We begin with the raw amino-acid sequence, 421 residues long: Flap endonuclease 1 (421 aa).

Positions 1-109 are N-domain; sequence MGIKGLAKLL…HELIKRREKR (109 aa). Asp34 contacts Mg(2+). DNA contacts are provided by Arg47 and Arg75. Residues Asp91, Glu163, Glu165, Asp184, and Asp186 each contribute to the Mg(2+) site. The segment at 127 to 258 is I-domain; that stretch reads EQDKQSKRLV…KTALKLIREH (132 aa). Glu163 is a binding site for DNA. DNA is bound by residues Gly236 and Asp238. Asp238 lines the Mg(2+) pocket. Positions 284–307 are disordered; the sequence is KKLDAQSDDDDEEGVESPSKEENN. The segment covering 289–298 has biased composition (acidic residues); the sequence is QSDDDDEEGV. The segment at 379–387 is interaction with PCNA; the sequence is PQTRMDSFF. Residues 398 to 421 form a disordered region; that stretch reads SAAKRKADAAKAKAAVSKKKTKKH.

The protein belongs to the XPG/RAD2 endonuclease family. FEN1 subfamily. As to quaternary structure, interacts with PCNA. Three molecules of FEN1 bind to one PCNA trimer with each molecule binding to one PCNA monomer. PCNA stimulates the nuclease activity without altering cleavage specificity. The cofactor is Mg(2+). In terms of processing, phosphorylated. Phosphorylation upon DNA damage induces relocalization to the nuclear plasma.

It localises to the nucleus. The protein localises to the nucleolus. The protein resides in the nucleoplasm. Its subcellular location is the mitochondrion. Functionally, structure-specific nuclease with 5'-flap endonuclease and 5'-3' exonuclease activities involved in DNA replication and repair. During DNA replication, cleaves the 5'-overhanging flap structure that is generated by displacement synthesis when DNA polymerase encounters the 5'-end of a downstream Okazaki fragment. It enters the flap from the 5'-end and then tracks to cleave the flap base, leaving a nick for ligation. Also involved in the long patch base excision repair (LP-BER) pathway, by cleaving within the apurinic/apyrimidinic (AP) site-terminated flap. Acts as a genome stabilization factor that prevents flaps from equilibrating into structures that lead to duplications and deletions. Also possesses 5'-3' exonuclease activity on nicked or gapped double-stranded DNA, and exhibits RNase H activity. Also involved in replication and repair of rDNA and in repairing mitochondrial DNA. The polypeptide is Flap endonuclease 1 (Phaeodactylum tricornutum (strain CCAP 1055/1)).